We begin with the raw amino-acid sequence, 287 residues long: Light-independent protochlorophyllide reductase iron-sulfur ATP-binding protein (287 aa).

Residues G10–T15 and K39 contribute to the ATP site. Residue S14 participates in Mg(2+) binding. [4Fe-4S] cluster contacts are provided by C95 and C129. Position 181–182 (N181–R182) interacts with ATP.

Belongs to the NifH/BchL/ChlL family. As to quaternary structure, homodimer. Protochlorophyllide reductase is composed of three subunits; BchL, BchN and BchB. [4Fe-4S] cluster is required as a cofactor.

The catalysed reaction is chlorophyllide a + oxidized 2[4Fe-4S]-[ferredoxin] + 2 ADP + 2 phosphate = protochlorophyllide a + reduced 2[4Fe-4S]-[ferredoxin] + 2 ATP + 2 H2O. Its pathway is porphyrin-containing compound metabolism; bacteriochlorophyll biosynthesis (light-independent). Functionally, component of the dark-operative protochlorophyllide reductase (DPOR) that uses Mg-ATP and reduced ferredoxin to reduce ring D of protochlorophyllide (Pchlide) to form chlorophyllide a (Chlide). This reaction is light-independent. The L component serves as a unique electron donor to the NB-component of the complex, and binds Mg-ATP. The polypeptide is Light-independent protochlorophyllide reductase iron-sulfur ATP-binding protein (Heliobacterium modesticaldum (strain ATCC 51547 / Ice1)).